A 118-amino-acid polypeptide reads, in one-letter code: Putative pterin-4-alpha-carbinolamine dehydratase (118 aa).

It belongs to the pterin-4-alpha-carbinolamine dehydratase family.

The enzyme catalyses (4aS,6R)-4a-hydroxy-L-erythro-5,6,7,8-tetrahydrobiopterin = (6R)-L-erythro-6,7-dihydrobiopterin + H2O. This is Putative pterin-4-alpha-carbinolamine dehydratase from Stutzerimonas stutzeri (strain A1501) (Pseudomonas stutzeri).